The primary structure comprises 628 residues: Translation factor GUF1, mitochondrial (628 aa).

One can recognise a tr-type G domain in the interval 27–209 (LPSRNFSIIA…AIISRIPPPS (183 aa)). GTP-binding positions include 36–43 (AHIDHGKS), 102–106 (DTPGH), and 156–159 (NKID).

Belongs to the TRAFAC class translation factor GTPase superfamily. Classic translation factor GTPase family. LepA subfamily.

The protein resides in the mitochondrion inner membrane. It carries out the reaction GTP + H2O = GDP + phosphate + H(+). Promotes mitochondrial protein synthesis. May act as a fidelity factor of the translation reaction, by catalyzing a one-codon backward translocation of tRNAs on improperly translocated ribosomes. Binds to mitochondrial ribosomes in a GTP-dependent manner. This chain is Translation factor GUF1, mitochondrial, found in Laccaria bicolor (strain S238N-H82 / ATCC MYA-4686) (Bicoloured deceiver).